Here is a 115-residue protein sequence, read N- to C-terminus: Ribosome-binding factor A (115 aa).

It belongs to the RbfA family. Monomer. Binds 30S ribosomal subunits, but not 50S ribosomal subunits or 70S ribosomes.

It is found in the cytoplasm. In terms of biological role, one of several proteins that assist in the late maturation steps of the functional core of the 30S ribosomal subunit. Associates with free 30S ribosomal subunits (but not with 30S subunits that are part of 70S ribosomes or polysomes). Required for efficient processing of 16S rRNA. May interact with the 5'-terminal helix region of 16S rRNA. This is Ribosome-binding factor A from Bacillus velezensis (strain DSM 23117 / BGSC 10A6 / LMG 26770 / FZB42) (Bacillus amyloliquefaciens subsp. plantarum).